Reading from the N-terminus, the 319-residue chain is MQNRNTYEWTKKMTRLISVLVMIHIITRTSISNAYPIFAQQGYENPREATGRIVCANCHLAKKPVDIEVPQSVLPNTVFEAIVKIPYDTQMKQVLANGKKGALNVGAVLILPEGFELAPPDRISPEIRQKTGNLYFQNYRPNQKNIIVIGPVPGQKYSELVFPILSPDPATDKEAHFLKYPIYVGGNRGRGQIYPDGSKSNNTVYSASATGRVSKILRKEKGGYEITIDNKSDGGQVVDIVPPGPELLISEGELIKVDQPLTNNPNMGGFGQGDAEIVLQDPLRVKGLLLFLASVILAQIFLVLKKKQFEKVQLAEMNL.

Residues Met1–Ala34 form the signal peptide. Residues Tyr35, Cys55, Cys58, and His59 each contribute to the heme site. Residues Val285–Lys305 form a helical membrane-spanning segment.

This sequence belongs to the cytochrome f family. In terms of assembly, the 4 large subunits of the cytochrome b6-f complex are cytochrome b6, subunit IV (17 kDa polypeptide, petD), cytochrome f and the Rieske protein, while the 4 small subunits are PetG, PetL, PetM and PetN. The complex functions as a dimer. It depends on heme as a cofactor.

It is found in the plastid. The protein localises to the chloroplast thylakoid membrane. Component of the cytochrome b6-f complex, which mediates electron transfer between photosystem II (PSII) and photosystem I (PSI), cyclic electron flow around PSI, and state transitions. This is Cytochrome f from Pinus koraiensis (Korean pine).